The primary structure comprises 474 residues: Phosphatidylserine synthase 2 (474 aa).

The Lumenal portion of the chain corresponds to 1–62 (MLRSDVRRVA…DDGTNTFFWR (62 aa)). A helical membrane pass occupies residues 63 to 83 (AHTLTVLFILTCSLGYVTLLE). Residues 84–96 (ETPQDTAYNAKRG) lie on the Cytoplasmic side of the membrane. A helical transmembrane segment spans residues 97 to 117 (IIASILVFLCFGVTQAKDGPF). Topologically, residues 118-126 (SRPHPAYWR) are lumenal. A helical transmembrane segment spans residues 127–147 (FWLCVSVVYELFLIFILFQTV). Residues 148–313 (HDGRQFMKFI…EWKPASSLRR (166 aa)) are Cytoplasmic-facing. A helical membrane pass occupies residues 314–334 (WLAVCGIIFVFLLAELNTFYL). A topological domain (lumenal) is located at residue Lys-335. A helical transmembrane segment spans residues 336–356 (FVLWMPPEHYLVLLRLVFFVN). Topologically, residues 357–376 (VGGVAMREIYDFMDDLKFHK) are cytoplasmic. The helical transmembrane segment at 377 to 397 (KLGQQAWMVAAITVTEFLIVV) threads the bilayer. The Lumenal segment spans residues 398–403 (KYDPYT). Residues 404 to 424 (ITLPLPFYVTQCWILGIVLVL) form a helical membrane-spanning segment. At 425–474 (TWTVWRFFIRDITLRYKEIRQQKQHRNEEEKSHRNGDVNSEKDTNKHKKH) the chain is on the cytoplasmic side. The span at 448 to 468 (QHRNEEEKSHRNGDVNSEKDT) shows a compositional bias: basic and acidic residues. Residues 448-474 (QHRNEEEKSHRNGDVNSEKDTNKHKKH) form a disordered region.

It belongs to the phosphatidyl serine synthase family.

The protein resides in the endoplasmic reticulum membrane. The enzyme catalyses a 1,2-diacyl-sn-glycero-3-phosphoethanolamine + L-serine = a 1,2-diacyl-sn-glycero-3-phospho-L-serine + ethanolamine. It catalyses the reaction 1-hexadecanoyl-2-(9Z-octadecenoyl)-sn-glycero-3-phosphoethanolamine + L-serine = 1-hexadecanoyl-2-(9Z-octadecenoyl)-sn-glycero-3-phospho-L-serine + ethanolamine. It carries out the reaction 1-hexadecanoyl-2-(4Z,7Z,10Z,13Z,16Z,19Z-docosahexaenoyl)-sn-glycero-3-phosphoethanolamine + L-serine = 1-hexadecanoyl-2-(4Z,7Z,10Z,13Z,16Z,19Z-docosahexaenoyl)-sn-glycero-3-phosphoserine + ethanolamine. The catalysed reaction is 1-octadecanoyl-2-(5Z,8Z,11Z,14Z)-eicosatetraenoyl-sn-glycero-3-phosphoethanolamine + L-serine = 1-octadecanoyl-2-(5Z,8Z,11Z,14Z)-eicosatetraenoyl-sn-glycero-3-phosphoserine + ethanolamine. The enzyme catalyses 1-octadecanoyl-2-(4Z,7Z,10Z,13Z,16Z,19Z-docosahexaenoyl)-sn-glycero-3-phosphoethanolamine + L-serine = 1-octadecanoyl-2-(4Z,7Z,10Z,13Z,16Z,19Z-docosahexaenoyl)-sn-glycero-3-phosphoserine + ethanolamine. It catalyses the reaction 1-(1Z-octadecenyl)-2-(4Z,7Z,10Z,13Z,16Z,19Z-docosahexaenoyl)-sn-glycero-3-phosphoethanolamine + L-serine = 1-(1Z-octadecenyl)-2-(4Z,7Z,10Z,13Z,16Z,19Z-docosahexaenoyl)-sn-glycero-3-phospho-L-serine + ethanolamine. It carries out the reaction 1-octadecanoyl-2-(9Z-octadecenoyl)-sn-glycero-3-phosphoethanolamine + L-serine = 1-octadecanoyl-2-(9Z-octadecenoyl)-sn-glycero-3-phospho-L-serine + ethanolamine. The catalysed reaction is 1-(1Z-octadecenyl)-2-(9Z-octadecenoyl)-sn-glycero-3-phosphoethanolamine + L-serine = 1-(1Z-octadecenyl)-2-(9Z-octadecenoyl)-sn-glycero-3-phospho-L-serine + ethanolamine. The enzyme catalyses 1-(1Z-octadecenyl)-2-(5Z,8Z,11Z,14Z- eicosatetraenoyl)-sn-glycero-3-phosphoethanolamine + L-serine = 1-(1Z-octadecenyl)-2-(5Z,8Z,11Z,14Z-eicosatetraenoyl)-sn-glycero-3-phospho-L-serine + ethanolamine. It participates in phospholipid metabolism; phosphatidylserine biosynthesis. Its function is as follows. Catalyzes a base-exchange reaction in which the polar head group of phosphatidylethanolamine (PE) or phosphatidylcholine (PC) is replaced by L-serine. Catalyzes the conversion of phosphatatidylethanolamine and does not act on phosphatidylcholine. Can utilize both phosphatidylethanolamine (PE) plasmalogen and diacyl PE as substrate and the latter is six times better utilized, indicating the importance of an ester linkage at the sn-1 position. Although it shows no sn-1 fatty acyl preference, exhibits significant preference towards docosahexaenoic acid (22:6n-3) compared with 18:1 or 20:4 at the sn-2 position. The chain is Phosphatidylserine synthase 2 (ptdss2) from Xenopus tropicalis (Western clawed frog).